The following is a 215-amino-acid chain: Chaperone protein TorD (215 aa).

It belongs to the TorD/DmsD family. TorD subfamily.

The protein localises to the cytoplasm. Involved in the biogenesis of TorA. Acts on TorA before the insertion of the molybdenum cofactor and, as a result, probably favors a conformation of the apoenzyme that is competent for acquiring the cofactor. The protein is Chaperone protein TorD of Shewanella piezotolerans (strain WP3 / JCM 13877).